The primary structure comprises 250 residues: Nuclear transcription factor Y subunit C-4 (250 aa).

Positions 219 to 250 (GIAYGGQQGHPGYLWQDPQEQQEEPPAEQQSD) are disordered. A compositionally biased stretch (acidic residues) spans 238-250 (EQQEEPPAEQQSD).

Belongs to the NFYC/HAP5 subunit family. As to quaternary structure, heterotrimeric transcription factor composed of three components, NF-YA, NF-YB and NF-YC. NF-YB and NF-YC must interact and dimerize for NF-YA association and DNA binding. Interacts with NFYB2. Interacts with NFYB8, NFYB10 and HD5/NFYB11.

The protein resides in the nucleus. It is found in the cytoplasm. Functionally, probable transcription factor involved in the regulation of flowering time under long day (LD) conditions. Functions as a repressor of flowering, independently of HD1 and GHD7. Controls flowering time by negatively regulating the expression of EHD1 and HD3A. Component of the NF-Y/HAP transcription factor complex. This chain is Nuclear transcription factor Y subunit C-4, found in Oryza sativa subsp. japonica (Rice).